The sequence spans 150 residues: Arginine repressor (150 aa).

The protein belongs to the ArgR family.

The protein resides in the cytoplasm. Its pathway is amino-acid biosynthesis; L-arginine biosynthesis [regulation]. Regulates arginine biosynthesis genes. The polypeptide is Arginine repressor (Carboxydothermus hydrogenoformans (strain ATCC BAA-161 / DSM 6008 / Z-2901)).